The primary structure comprises 476 residues: Sulfate adenylyltransferase subunit 1 (476 aa).

The region spanning 24 to 228 is the tr-type G domain; the sequence is KSLLRFLTCG…MAWYQGPTLL (205 aa). The G1 stretch occupies residues 33 to 40; the sequence is GSVDDGKS. 33–40 provides a ligand contact to GTP; the sequence is GSVDDGKS. The segment at 91–95 is G2; sequence GITID. A G3 region spans residues 112–115; the sequence is DTPG. GTP-binding positions include 112–116 and 167–170; these read DTPGH and NKMD. Residues 167-170 form a G4 region; the sequence is NKMD. Residues 205 to 207 are G5; it reads SAL.

It belongs to the TRAFAC class translation factor GTPase superfamily. Classic translation factor GTPase family. CysN/NodQ subfamily. In terms of assembly, heterodimer composed of CysD, the smaller subunit, and CysN.

The enzyme catalyses sulfate + ATP + H(+) = adenosine 5'-phosphosulfate + diphosphate. The protein operates within sulfur metabolism; hydrogen sulfide biosynthesis; sulfite from sulfate: step 1/3. Its function is as follows. With CysD forms the ATP sulfurylase (ATPS) that catalyzes the adenylation of sulfate producing adenosine 5'-phosphosulfate (APS) and diphosphate, the first enzymatic step in sulfur assimilation pathway. APS synthesis involves the formation of a high-energy phosphoric-sulfuric acid anhydride bond driven by GTP hydrolysis by CysN coupled to ATP hydrolysis by CysD. The protein is Sulfate adenylyltransferase subunit 1 of Vibrio vulnificus (strain CMCP6).